The following is a 271-amino-acid chain: Phosphatidylinositol transfer protein beta isoform (271 aa).

An N6-acetyllysine modification is found at Lys-215. Ser-262 is modified (phosphoserine).

Belongs to the PtdIns transfer protein family. PI transfer class I subfamily. Constitutive phosphorylation of Ser-262 has no effect on phospholipid transfer activity but is required for Golgi targeting. In terms of tissue distribution, widely expressed in various tissues including brain.

The protein resides in the golgi apparatus. Its subcellular location is the golgi apparatus membrane. It localises to the endoplasmic reticulum membrane. The enzyme catalyses a 1,2-diacyl-sn-glycero-3-phosphocholine(in) = a 1,2-diacyl-sn-glycero-3-phosphocholine(out). It carries out the reaction a 1,2-diacyl-sn-glycero-3-phospho-(1D-myo-inositol)(in) = a 1,2-diacyl-sn-glycero-3-phospho-(1D-myo-inositol)(out). It catalyses the reaction an N-(acyl)-sphingosylphosphocholine(in) = an N-(acyl)-sphingosylphosphocholine(out). Phosphatidylinositol transfer activity is inhibited by N-ethylmaleimide. Its function is as follows. Catalyzes the transfer of phosphatidylinositol and phosphatidylcholine between membranes. Also catalyzes the transfer of sphingomyelin. Required for COPI-mediated retrograde transport from the Golgi to the endoplasmic reticulum; phosphatidylinositol and phosphatidylcholine transfer activity is essential for this function. In Homo sapiens (Human), this protein is Phosphatidylinositol transfer protein beta isoform (PITPNB).